The sequence spans 404 residues: Dihydrosphingosine 1-phosphate phosphatase YSR3 (404 aa).

At 1–86 (MTIIQTVTEL…PFRDVYFKYT (86 aa)) the chain is on the lumenal side. Asn62 carries N-linked (GlcNAc...) asparagine glycosylation. Residues 87 to 107 (SLMGSHMFYVIVLPMPVWLGY) form a helical membrane-spanning segment. Residues 108 to 113 (RDLTRD) lie on the Cytoplasmic side of the membrane. Residues 114–134 (MIYVLGYSIYLSGYLKDYWCL) form a helical membrane-spanning segment. Residues 129–137 (KDYWCLPRP) are phosphatase sequence motif I. Over 135-154 (PRPKSPPVDRITLSEYTTKE) the chain is Lumenal. Residues 155-176 (YGAPSSHSANATAVSLLFFWRI) form a helical membrane-spanning segment. Residues 158–161 (PSSH) form a phosphatase sequence motif II region. The Proton donor role is filled by His161. The Cytoplasmic segment spans residues 177–182 (CLSDTL). The chain crosses the membrane as a helical span at residues 183–203 (VWPTKLLLLSLVIFYYLTLVF). Residues 204 to 215 (GRVYCGMHGMLD) are Lumenal-facing. The tract at residues 204–215 (GRVYCGMHGMLD) is phosphatase sequence motif III. His211 serves as the catalytic Nucleophile. The chain crosses the membrane as a helical span at residues 216 to 236 (LFSGAAVGAICFFIRIWVVHA). The Cytoplasmic portion of the chain corresponds to 237–241 (LRNFQ). Residues 242-262 (IGEHLWFPLLSVAWGLFILFN) traverse the membrane as a helical segment. Residues 263–319 (HVRPIDECPCFEDSVAFIGVVSGLDCSDWLTERYGWNLVCSRYASCGSKVFLRPLVG) lie on the Lumenal side of the membrane. The helical transmembrane segment at 320-340 (VASVIVWKDVISKTAVYTLLI) threads the bilayer. At 341-379 (KLLRFHDDRSEKVHFHNETSEEEECLLYSGVSKVEIVGR) the chain is on the cytoplasmic side. Residues 380–400 (FLIYAGIPTTVFLLCPVFFTW) form a helical membrane-spanning segment. The Lumenal segment spans residues 401–404 (TNLR).

It belongs to the type 2 lipid phosphate phosphatase family.

Its subcellular location is the endoplasmic reticulum membrane. The catalysed reaction is sphinganine 1-phosphate + H2O = sphinganine + phosphate. Its function is as follows. Dihydrosphingosine 1-phosphate phosphatase required for efficient ceramide synthesis from exogenous sphingoid bases. Involved in endocytosis and calcium-mediated signaling. The protein is Dihydrosphingosine 1-phosphate phosphatase YSR3 of Saccharomyces cerevisiae (strain ATCC 204508 / S288c) (Baker's yeast).